The primary structure comprises 292 residues: Norajmaline N-methyltransferase (292 aa).

Residues Lys-71 to Val-80 form an SAM motif I region. The SAM motif II stretch occupies residues Lys-134 to Leu-142. Positions Asp-135 to Val-141 match the Vacuolar targeting signal motif. An SAM motif III region spans residues Ile-161–Ile-170.

Belongs to the class I-like SAM-binding methyltransferase superfamily. gTMT family. As to quaternary structure, homodimer. Mainly expressed in mature roots and, to a lesser extent, in leaves, stems and flowers.

Its subcellular location is the vacuole membrane. The catalysed reaction is norajmaline + S-adenosyl-L-methionine = ajmaline + S-adenosyl-L-homocysteine + H(+). The enzyme catalyses 4-methylnorajmaline + S-adenosyl-L-methionine = 4-methylajmaline + S-adenosyl-L-homocysteine + H(+). It participates in alkaloid biosynthesis; ajmaline biosynthesis. Its function is as follows. N-methyltransferase involved in the biosynthesis of ajmaline-type monoterpenoid indole alkaloids (MIAs) natural products, important plant-derived pharmaceuticals used in the therapy of heart disorders. Catalyzes the indole N-methylation of norajmaline to produce ajmaline. Also able, with a lower efficiency, to mediates the conversion of 4-methylnorajmaline to 4-methylajmaline. The protein is Norajmaline N-methyltransferase of Rauvolfia serpentina (Serpentine wood).